Reading from the N-terminus, the 56-residue chain is Large ribosomal subunit protein bL32 (56 aa).

The interval 1–38 (MAVQQNKKSRSKRGMRRSHDSLSTAQLSVDATSGELHR) is disordered. The segment covering 7-16 (KKSRSKRGMR) has biased composition (basic residues). Residues 21–31 (SLSTAQLSVDA) show a composition bias toward polar residues.

This sequence belongs to the bacterial ribosomal protein bL32 family.

The polypeptide is Large ribosomal subunit protein bL32 (Shewanella woodyi (strain ATCC 51908 / MS32)).